Here is a 310-residue protein sequence, read N- to C-terminus: uncharacterized protein (310 aa).

Over residues 1-11 the composition is skewed to basic residues; the sequence is MKVKSILKHSR. 2 disordered regions span residues 1-227 and 242-310; these read MKVK…SDHA and AMEE…NENE. The segment covering 12–50 has biased composition (polar residues); sequence MSSPSLETDSMESGQQQNMVSSTPSIDMNESDCSGTGTP. The segment covering 51 to 80 has biased composition (basic and acidic residues); sequence SEERIRRLRWDEENLSKAEQQKSAKMKITE. Positions 91–105 are enriched in acidic residues; it reads PDDEVPEINLDETDS. The span at 110–121 shows a compositional bias: low complexity; it reads TAGTLGDTLGTL. Basic and acidic residues-rich tracts occupy residues 126–150 and 182–195; these read VSKDSKDDNVSFSSDKKQFYVKKEP and LPSKKELFPRETKP. Over residues 242–253 the composition is skewed to acidic residues; that stretch reads AMEEEALSEAEE. The span at 254–265 shows a compositional bias: basic and acidic residues; the sequence is NIPKKKPDFNEL. Position 285 is a phosphoserine (S285). A compositionally biased stretch (polar residues) spans 297-310; sequence DSGSASDVNMNENE.

This is an uncharacterized protein from Schizosaccharomyces pombe (strain 972 / ATCC 24843) (Fission yeast).